Consider the following 207-residue polypeptide: Protein GET1 (207 aa).

The Lumenal portion of the chain corresponds to 1–4 (MPSL). Residues 5-24 (LISVLFLHIAIYIINTIAAS) traverse the membrane as a helical segment. Over 25–110 (TIDSLLWLIY…FFDVAVKALR (86 aa)) the chain is Cytoplasmic. The stretch at 44-97 (IAREQHQMKLEVVQLKREMNATSSQDEFAKWAKLRRRHDKALEEYEVKNKQFSR) forms a coiled coil. A helical membrane pass occupies residues 111-131 (WAGTSGLIVFLQFWFSKTPIF). The Lumenal segment spans residues 132 to 155 (TLPPSWIPWQVEWVLSFPRAPMGT). The chain crosses the membrane as a helical span at residues 156-172 (VSIQVWGGACAVVVALI). At 173 to 207 (GEAIGATVRYLYASKDSMEAIKVGAGAVEKEKKRQ) the chain is on the cytoplasmic side.

Belongs to the WRB/GET1 family. As to quaternary structure, interacts with GET3.

The protein resides in the endoplasmic reticulum membrane. Its function is as follows. Required for the post-translational delivery of tail-anchored (TA) proteins to the endoplasmic reticulum. Acts as a membrane receptor for soluble GET3, which recognizes and selectively binds the transmembrane domain of TA proteins in the cytosol. The protein is Protein GET1 of Paracoccidioides brasiliensis (strain Pb18).